Here is a 202-residue protein sequence, read N- to C-terminus: Peptidyl-tRNA hydrolase (202 aa).

A tRNA-binding site is contributed by Tyr-19. His-24 serves as the catalytic Proton acceptor. TRNA contacts are provided by Tyr-70, Asn-72, and Asn-118.

This sequence belongs to the PTH family. Monomer.

It localises to the cytoplasm. The enzyme catalyses an N-acyl-L-alpha-aminoacyl-tRNA + H2O = an N-acyl-L-amino acid + a tRNA + H(+). In terms of biological role, hydrolyzes ribosome-free peptidyl-tRNAs (with 1 or more amino acids incorporated), which drop off the ribosome during protein synthesis, or as a result of ribosome stalling. Functionally, catalyzes the release of premature peptidyl moieties from peptidyl-tRNA molecules trapped in stalled 50S ribosomal subunits, and thus maintains levels of free tRNAs and 50S ribosomes. The chain is Peptidyl-tRNA hydrolase from Prochlorococcus marinus (strain NATL2A).